The following is a 249-amino-acid chain: Putative TrmH family tRNA/rRNA methyltransferase (249 aa).

3 residues coordinate S-adenosyl-L-methionine: Gly-196, Ile-216, and Leu-225.

It belongs to the class IV-like SAM-binding methyltransferase superfamily. RNA methyltransferase TrmH family.

The sequence is that of Putative TrmH family tRNA/rRNA methyltransferase from Staphylococcus haemolyticus (strain JCSC1435).